The chain runs to 109 residues: MPLQPPPDHTWAVRIIALGLAVTALIFTSTRDTSRHVGDPSHSLPFGGHYRDGSKVIHYNSPRSSKPSNHTPYLLFAPIGIILLIHALHRLGNSAHICRCTHCMPHSQT.

Residues 1–9 (MPLQPPPDH) lie on the Cytoplasmic side of the membrane. A helical membrane pass occupies residues 10 to 30 (TWAVRIIALGLAVTALIFTST). Residues 31–71 (RDTSRHVGDPSHSLPFGGHYRDGSKVIHYNSPRSSKPSNHT) lie on the Lumenal side of the membrane. A helical membrane pass occupies residues 72-92 (PYLLFAPIGIILLIHALHRLG). At 93 to 109 (NSAHICRCTHCMPHSQT) the chain is on the cytoplasmic side.

Belongs to the Tymovirales TGBp2 protein family.

It localises to the host endoplasmic reticulum membrane. Its function is as follows. Plays a role in viral cell-to-cell propagation, by facilitating genome transport to neighboring plant cells through plasmosdesmata,. The chain is Movement protein TGB2 from Citrus (ICRSV).